Here is a 928-residue protein sequence, read N- to C-terminus: MSRRVRQRVEDNGKYKVDSPSYTVIGVEDLAPKVQQYVNWTSLPYDTVFHLFTRLNYRDRASLASTCRTWRSLGASSFLWSSLDLRAHKFDLSMAASLATRCVDLQKIRFRGVDSADAIIHLKARSLLEISGDYCRKITDATLSMIAARHEALESLQLGPDFCERITSDAIRVIAFCCPKLKKLRVSGMRDVSSEAIESLAKHCPQLSDLGFLDCLNINEEALGKVVSLRYLSVAGTSNIKWKVALENWEKLPKLIGLDVSRTTIDHIAVSRLLKSSQSLKVLCALNCPYLEEDKSYSSNRFKGKVLLAVFTDTFDELASIFADNSKKPKNIFSYWRDLIRKDKSIDEIMLWIEWIISHTLLRIAESSNSQGLNDFWLNQGATLLLSLMQSAQEDVQERAATGLATFIVVDDENASIDCGRAEAVMRDGGIRLLLELAKSWREGLQSEAAKAIANLSVNAKVAKAVAEEGGISVLADLAKSMNRLVAEEAAGGLWNLSVGEEHKNAIAQAGGVNALVDLIFRWPHGCDGVLERAAGALANLAADDKCSMEVARAGGVHALVMLARNCKYEGAQEQAARALANLAAHGDSNGNNAAVGQEAGALEALVQLTQSPHEGVKQEAAGALWNLAFDDKNRESIAAFGGVEALVALAKSSSNASTGLQERVAGALWGLSVSEANSIAIGHEGGIPPLIALVRSEAEDVHETAAGALWNLSFNPGNALRIVEEGGVVALVQLCSSSVSKMARFMAALALAYMFDGRMDEYAMIGTSLESTSKSVTLNGARTMALDQIKAFIKTFMEHQIFSTGALSSAPSMLAQVSERARIPEAGHLRCSGSEIGRFVTMLRNPCLVLRACAAFALLQFTIPESRHAMHHASLMQNAGEARGLRSAAAAASMPREAKIFMKIVLRNLEHQQAESPEGMKVSYNRI.

The Nuclear localization signal signature appears at 3-8; it reads RRVRQR. An F-box domain is found at 37–83; the sequence is YVNWTSLPYDTVFHLFTRLNYRDRASLASTCRTWRSLGASSFLWSSL. ARM repeat units lie at residues 147-186, 237-278, 303-341, 370-409, 419-458, 460-499, 501-543, 545-585, 591-630, 632-674, 676-715, 717-757, and 824-864; these read AARH…KLRV, TSNI…KSSQ, KGKV…DLIR, SQGL…TFIV, CGRA…NLSV, AKVA…NLSV, EEHK…NLAA, DKCS…NLAA, GNNA…NLAF, DKNR…GLSV, EANS…NLSF, PGNA…YMFD, and IPEA…QFTI.

The protein belongs to the beta-catenin family. In terms of tissue distribution, expressed ubiquitously.

The protein resides in the nucleus. Its function is as follows. Promotes lateral root initiation and development, independently of auxin (IAA) and abscisis acid (ABA). This chain is Protein ARABIDILLO 2, found in Arabidopsis thaliana (Mouse-ear cress).